Consider the following 446-residue polypeptide: 6-methylsalicylate 1-monooxygenase atA (446 aa).

Residues 7-27 (VSVAIIGGGIGGLSLAIGLLQ) form a helical membrane-spanning segment. Residues Glu37 and Ala50 each contribute to the FAD site. A glycan (N-linked (GlcNAc...) asparagine) is linked at Asn107. An FAD-binding site is contributed by Arg116. Arg200 is an active-site residue. FAD contacts are provided by Asp311 and Ala324.

It belongs to the paxM FAD-dependent monooxygenase family. FAD serves as cofactor.

Its subcellular location is the membrane. The enzyme catalyses 6-methylsalicylate + AH2 + O2 + H(+) = 3-methylcatechol + A + CO2 + H2O. It functions in the pathway secondary metabolite biosynthesis. In terms of biological role, 6-methylsalicylate 1-monooxygenase; part of the gene cluster that mediates the biosynthesis of terreic acid, a quinone epoxide inhibitor of Bruton's tyrosine kinase. The first step of the pathway is the synthesis of 6-methylsalicylic acid (6-MSA) by the 6-methylsalicylic acid synthase atX. In the biosynthesis of 6-MSA, atX utilizes one acetyl-CoA and three malonyl-CoAs as its substrates and catalyzes a series of programmed reactions including Claisen condensation, reduction, aldol cyclization, and the hydrolytic cleavage that yields 6-MSA. The 6-methylsalicylate 1-monooxygenase atA then catalyzes the decarboxylative hydroxylation of 6-MSA to 3-methylcatechol. The next step is the conversion of 3-methylcatechol to 3-methyl-1,2,4-benzenetriol by cytochrome P450 monooxygenase atE, which is enhanced by cytochrome P450 monooxygenase atG. Then, the epoxidase atD catalyzes the epoxidation and hydroxyl oxidation of 3-methyl-1,2,4-benzenetriol to terremutin. Lastly, GMC oxidoreductase atC oxidizes terremutin to terreic acid. This is 6-methylsalicylate 1-monooxygenase atA from Aspergillus terreus (strain NIH 2624 / FGSC A1156).